The chain runs to 103 residues: Putative truncated guanine nucleotide exchange factor YLL017W (103 aa).

In terms of domain architecture, SH3 spans 26-97 (QPIDVVECTY…PPSFYTVHSK (72 aa)).

The protein is Putative truncated guanine nucleotide exchange factor YLL017W of Saccharomyces cerevisiae (strain ATCC 204508 / S288c) (Baker's yeast).